The following is a 1793-amino-acid chain: Brefeldin A-inhibited guanine nucleotide-exchange protein 2 (1793 aa).

The residue at position 2 (alanine 2) is an N-acetylalanine. 3 disordered regions span residues 45-71, 266-299, and 579-606; these read NSLQKSPPPSSSAATDSESESSVPGPL, TMSGSGSGSGSGGQDGAYGTTTVETTNPTDLLDS, and GSPQLANGNADESADGSDTYSESSGGTS. Low complexity predominate over residues 55-66; that stretch reads SSAATDSESESS. Residues 270-281 are compositionally biased toward gly residues; it reads SGSGSGSGGQDG. Composition is skewed to polar residues over residues 284 to 294 and 594 to 605; these read GTTTVETTNPT and GSDTYSESSGGT. Serine 595 bears the Phosphoserine mark. An SEC7 domain is found at 610–797; sequence AIEQRRAYKL…RSLYERITKH (188 aa). The active site involves glutamate 712. A compositionally biased stretch (polar residues) spans 1311-1327; it reads NKYKGTSGKIPQSSLHS. The tract at residues 1311–1333 is disordered; that stretch reads NKYKGTSGKIPQSSLHSGKSGKQ.

As to quaternary structure, homodimer.

It is found in the cytoplasm. Its subcellular location is the cytosol. It localises to the membrane. Its activity is regulated as follows. Inhibited by brefeldin A. Activates the ARF proteins by exchanging bound GDP for free GTP. Plays a role in vesicular protein sorting. This chain is Brefeldin A-inhibited guanine nucleotide-exchange protein 2 (BIG2), found in Arabidopsis thaliana (Mouse-ear cress).